The primary structure comprises 461 residues: Cysteine--tRNA ligase (461 aa).

Cys-28 is a Zn(2+) binding site. The 'HIGH' region signature appears at 30–40; the sequence is ITVYDLCHIGH. Residues Cys-209, His-234, and Glu-238 each contribute to the Zn(2+) site. The 'KMSKS' region motif lies at 266–270; that stretch reads KMSKS. Lys-269 lines the ATP pocket.

This sequence belongs to the class-I aminoacyl-tRNA synthetase family. In terms of assembly, monomer. Requires Zn(2+) as cofactor.

It is found in the cytoplasm. It catalyses the reaction tRNA(Cys) + L-cysteine + ATP = L-cysteinyl-tRNA(Cys) + AMP + diphosphate. This is Cysteine--tRNA ligase from Salmonella dublin (strain CT_02021853).